The primary structure comprises 82 residues: MKMESSKMLVVFTLMVLIAVSSDLVSGNFASGEASSQLCFNPCTPQLGNNECNTICMNKKYKEGSCVGFGIPPTSKYCCCKT.

The first 27 residues, 1 to 27 (MKMESSKMLVVFTLMVLIAVSSDLVSG), serve as a signal peptide directing secretion. 4 disulfides stabilise this stretch: C39–C80, C43–C66, C52–C78, and C56–C79.

This sequence belongs to the DEFL family.

The protein resides in the secreted. In Arabidopsis thaliana (Mouse-ear cress), this protein is Putative defensin-like protein 70 (LCR83).